We begin with the raw amino-acid sequence, 278 residues long: NAD kinase (278 aa).

Catalysis depends on Asp-67, which acts as the Proton acceptor. NAD(+) contacts are provided by residues 67–68 (DG), Arg-72, 137–138 (NE), Lys-148, Arg-165, Asp-167, 178–183 (TGYALS), and Gln-237.

This sequence belongs to the NAD kinase family. A divalent metal cation is required as a cofactor.

The protein resides in the cytoplasm. It carries out the reaction NAD(+) + ATP = ADP + NADP(+) + H(+). Its function is as follows. Involved in the regulation of the intracellular balance of NAD and NADP, and is a key enzyme in the biosynthesis of NADP. Catalyzes specifically the phosphorylation on 2'-hydroxyl of the adenosine moiety of NAD to yield NADP. This chain is NAD kinase, found in Thermococcus gammatolerans (strain DSM 15229 / JCM 11827 / EJ3).